The primary structure comprises 267 residues: MGKLMAPKILVTNDDGVYSTGLKAAFDSVSDLGEVTISAPAVQQSGVGRSISIFEPLRITKTNAGGIPAYSVGGTPTDAVILGIFTILKEMPDLVLSGFNIGENISTDTITTSGTIGGALEAASYGVPAIAASMQVLDEGQKFDDPRDYHRERFEAGIKVVNRVAQNVLNYGMPENVDLLNINIPYHAEEDTPIEITRLARKIFKTDVEERRDPRGRPYYWIAGDLIREEEEGTDVHAIMQKGHVSITPISLDSTARIEFSEIEKYL.

A divalent metal cation contacts are provided by aspartate 14, aspartate 15, serine 45, and asparagine 100.

The protein belongs to the SurE nucleotidase family. The cofactor is a divalent metal cation.

Its subcellular location is the cytoplasm. It carries out the reaction a ribonucleoside 5'-phosphate + H2O = a ribonucleoside + phosphate. In terms of biological role, nucleotidase that shows phosphatase activity on nucleoside 5'-monophosphates. This Methanosarcina barkeri (strain Fusaro / DSM 804) protein is 5'-nucleotidase SurE.